The primary structure comprises 478 residues: Argininosuccinate lyase (478 aa).

Belongs to the lyase 1 family. Argininosuccinate lyase subfamily.

The protein localises to the cytoplasm. The enzyme catalyses 2-(N(omega)-L-arginino)succinate = fumarate + L-arginine. It functions in the pathway amino-acid biosynthesis; L-arginine biosynthesis; L-arginine from L-ornithine and carbamoyl phosphate: step 3/3. This Leptospira biflexa serovar Patoc (strain Patoc 1 / Ames) protein is Argininosuccinate lyase.